The sequence spans 258 residues: Axonemal dynein light intermediate polypeptide 1 (258 aa).

Disordered regions lie at residues 19 to 60 and 207 to 231; these read RNTE…CVPD and VNEQ…EEKK. A compositionally biased stretch (low complexity) spans 34–48; it reads SPQQPGPSGSAPQLP. The stretch at 176 to 255 forms a coiled coil; the sequence is MRKALQAEQG…LKAQLEGIIA (80 aa).

Belongs to the inner dynein arm light chain family. In terms of assembly, interacts with CFAP45. Interacts with DYNC1H1.

The protein localises to the cell projection. The protein resides in the cilium. It is found in the flagellum. It localises to the dynein axonemal particle. Its subcellular location is the cytoplasm. In terms of biological role, involved in sperm flagellum assembly. The sequence is that of Axonemal dynein light intermediate polypeptide 1 (DNALI1) from Macaca fascicularis (Crab-eating macaque).